A 252-amino-acid chain; its full sequence is Trans-aconitate 2-methyltransferase (252 aa).

The protein belongs to the methyltransferase superfamily. Tam family.

The protein localises to the cytoplasm. The catalysed reaction is trans-aconitate + S-adenosyl-L-methionine = (E)-3-(methoxycarbonyl)pent-2-enedioate + S-adenosyl-L-homocysteine. Functionally, catalyzes the S-adenosylmethionine monomethyl esterification of trans-aconitate. In Shigella flexneri, this protein is Trans-aconitate 2-methyltransferase.